Reading from the N-terminus, the 203-residue chain is Transcriptional regulator GfcR (203 aa).

The protein belongs to the purine/pyrimidine phosphoribosyltransferase family. GfcR subfamily.

The polypeptide is Transcriptional regulator GfcR (Methanococcoides burtonii (strain DSM 6242 / NBRC 107633 / OCM 468 / ACE-M)).